Here is a 140-residue protein sequence, read N- to C-terminus: Large ribosomal subunit protein uL3 (140 aa).

This sequence belongs to the universal ribosomal protein uL3 family. As to quaternary structure, part of the 50S ribosomal subunit. Forms a cluster with proteins L14 and L19.

Its function is as follows. One of the primary rRNA binding proteins, it binds directly near the 3'-end of the 23S rRNA, where it nucleates assembly of the 50S subunit. This chain is Large ribosomal subunit protein uL3 (rplC), found in Planobispora rosea.